We begin with the raw amino-acid sequence, 70 residues long: Large ribosomal subunit protein bL31 (70 aa).

4 residues coordinate Zn(2+): Cys16, Cys18, Cys38, and Cys41.

This sequence belongs to the bacterial ribosomal protein bL31 family. Type A subfamily. Part of the 50S ribosomal subunit. The cofactor is Zn(2+).

In terms of biological role, binds the 23S rRNA. The sequence is that of Large ribosomal subunit protein bL31 from Vesicomyosocius okutanii subsp. Calyptogena okutanii (strain HA).